We begin with the raw amino-acid sequence, 86 residues long: Putative protein adenylyltransferase MJ1215 (86 aa).

The GSX(10)DXD motif signature appears at 35–49 (GSYARGEQKETSDID). Residues Asp-47, Asp-49, and Asp-79 each contribute to the Mg(2+) site.

This sequence belongs to the MntA antitoxin family. As to quaternary structure, probably forms a complex with cognate toxin MJ1216. The cofactor is Mg(2+).

The enzyme catalyses L-tyrosyl-[protein] + ATP = O-(5'-adenylyl)-L-tyrosyl-[protein] + diphosphate. The catalysed reaction is O-(5'-adenylyl)-L-tyrosyl-[protein] + ATP = O-[5'-(adenylyl-(5'-&gt;3')-adenylyl)]-L-tyrosyl-[protein] + diphosphate. Functionally, probable antitoxin component of a putative type VII toxin-antitoxin (TA) system. Neutralizes cognate toxic MJ1216 by di-AMPylation. This chain is Putative protein adenylyltransferase MJ1215, found in Methanocaldococcus jannaschii (strain ATCC 43067 / DSM 2661 / JAL-1 / JCM 10045 / NBRC 100440) (Methanococcus jannaschii).